We begin with the raw amino-acid sequence, 240 residues long: UDP-2,3-diacylglucosamine hydrolase (240 aa).

5 residues coordinate Mn(2+): Asp8, His10, Asp41, Asn79, and His114. 79–80 (NR) serves as a coordination point for substrate. Positions 122, 160, 164, 167, and 195 each coordinate substrate. His195 and His197 together coordinate Mn(2+).

The protein belongs to the LpxH family. Requires Mn(2+) as cofactor.

The protein localises to the cell inner membrane. The catalysed reaction is UDP-2-N,3-O-bis[(3R)-3-hydroxytetradecanoyl]-alpha-D-glucosamine + H2O = 2-N,3-O-bis[(3R)-3-hydroxytetradecanoyl]-alpha-D-glucosaminyl 1-phosphate + UMP + 2 H(+). Its pathway is glycolipid biosynthesis; lipid IV(A) biosynthesis; lipid IV(A) from (3R)-3-hydroxytetradecanoyl-[acyl-carrier-protein] and UDP-N-acetyl-alpha-D-glucosamine: step 4/6. Hydrolyzes the pyrophosphate bond of UDP-2,3-diacylglucosamine to yield 2,3-diacylglucosamine 1-phosphate (lipid X) and UMP by catalyzing the attack of water at the alpha-P atom. Involved in the biosynthesis of lipid A, a phosphorylated glycolipid that anchors the lipopolysaccharide to the outer membrane of the cell. The polypeptide is UDP-2,3-diacylglucosamine hydrolase (Pectobacterium carotovorum subsp. carotovorum (strain PC1)).